The following is a 169-amino-acid chain: Ubiquitin-fold modifier-conjugating enzyme 1 (169 aa).

Cys116 acts as the Glycyl thioester intermediate in catalysis.

Belongs to the ubiquitin-conjugating enzyme family. UFC1 subfamily.

Its function is as follows. E2-like enzyme which forms an intermediate with UFM1 via a thioester linkage. The sequence is that of Ubiquitin-fold modifier-conjugating enzyme 1 from Branchiostoma floridae (Florida lancelet).